The chain runs to 196 residues: Lipoprotein signal peptidase (196 aa).

Positions 1–24 (MAEAERIIGMPENPDVDGTDEGGS) are disordered. 3 helical membrane-spanning segments follow: residues 40-60 (ILAL…SKML), 92-112 (IGEA…VVIF), and 118-138 (LYSL…LGNL). Catalysis depends on residues D155 and D169. A helical transmembrane segment spans residues 164–184 (VFNLADSAIVCGGILIVILSF).

It belongs to the peptidase A8 family.

It is found in the cell membrane. It carries out the reaction Release of signal peptides from bacterial membrane prolipoproteins. Hydrolyzes -Xaa-Yaa-Zaa-|-(S,diacylglyceryl)Cys-, in which Xaa is hydrophobic (preferably Leu), and Yaa (Ala or Ser) and Zaa (Gly or Ala) have small, neutral side chains.. The protein operates within protein modification; lipoprotein biosynthesis (signal peptide cleavage). Its function is as follows. This protein specifically catalyzes the removal of signal peptides from prolipoproteins. This is Lipoprotein signal peptidase from Streptomyces griseus subsp. griseus (strain JCM 4626 / CBS 651.72 / NBRC 13350 / KCC S-0626 / ISP 5235).